Here is a 474-residue protein sequence, read N- to C-terminus: Glycogen synthase (474 aa).

Lys-15 is an ADP-alpha-D-glucose binding site.

It belongs to the glycosyltransferase 1 family. Bacterial/plant glycogen synthase subfamily.

The catalysed reaction is [(1-&gt;4)-alpha-D-glucosyl](n) + ADP-alpha-D-glucose = [(1-&gt;4)-alpha-D-glucosyl](n+1) + ADP + H(+). It participates in glycan biosynthesis; glycogen biosynthesis. Its function is as follows. Synthesizes alpha-1,4-glucan chains using ADP-glucose. The sequence is that of Glycogen synthase from Chlamydia trachomatis serovar A (strain ATCC VR-571B / DSM 19440 / HAR-13).